The primary structure comprises 299 residues: tRNA dimethylallyltransferase (299 aa).

11–18 (GPTAVGKT) contributes to the ATP binding site. 13–18 (TAVGKT) contributes to the substrate binding site. Positions 36–39 (DSQQ) are interaction with substrate tRNA.

It belongs to the IPP transferase family. Monomer. The cofactor is Mg(2+).

It catalyses the reaction adenosine(37) in tRNA + dimethylallyl diphosphate = N(6)-dimethylallyladenosine(37) in tRNA + diphosphate. Its function is as follows. Catalyzes the transfer of a dimethylallyl group onto the adenine at position 37 in tRNAs that read codons beginning with uridine, leading to the formation of N6-(dimethylallyl)adenosine (i(6)A). The protein is tRNA dimethylallyltransferase of Streptococcus pyogenes serotype M18 (strain MGAS8232).